The sequence spans 116 residues: Small ribosomal subunit protein uS13m (116 aa).

The protein belongs to the universal ribosomal protein uS13 family. In terms of assembly, part of the small ribosomal subunit.

The protein localises to the mitochondrion. In terms of biological role, located at the top of the head of the small subunit, it contacts several helices of the 18S rRNA. The chain is Small ribosomal subunit protein uS13m (RPS13) from Nicotiana tabacum (Common tobacco).